A 60-amino-acid polypeptide reads, in one-letter code: Light-harvesting protein B-800/850 alpha chain (60 aa).

At 1–14 (MNNAKIWTVVKPST) the chain is on the cytoplasmic side. The chain crosses the membrane as a helical span at residues 15-35 (GIPLILGAVAVAALIVHAGLL). An a bacteriochlorophyll-binding site is contributed by His31. Over 36-60 (TNTTWFANYWNGNPMATVVAVAPAQ) the chain is Periplasmic.

Belongs to the antenna complex alpha subunit family. The core complex is formed by different alpha and beta chains, binding bacteriochlorophyll molecules, and arranged most probably in tetrameric structures disposed around the reaction center. The non-pigmented gamma chains may constitute additional components.

It is found in the cell inner membrane. Functionally, antenna complexes are light-harvesting systems, which transfer the excitation energy to the reaction centers. This Rhodobacter capsulatus (Rhodopseudomonas capsulata) protein is Light-harvesting protein B-800/850 alpha chain (pucA).